We begin with the raw amino-acid sequence, 330 residues long: LIM domain-containing protein pin-2 (330 aa).

5 LIM zinc-binding domains span residues 21-73, 82-132, 144-194, 202-255, and 264-315; these read CERC…CEHD, CAKC…CFLC, CNKC…CPRC, CFDC…CRDD, and CFIC…CKKC.

Expressed in neurons and intestine.

It localises to the cytoplasm. It is found in the nucleus. This chain is LIM domain-containing protein pin-2 (pin-2), found in Caenorhabditis elegans.